Here is a 150-residue protein sequence, read N- to C-terminus: Transcription antitermination protein NusB (150 aa).

The protein belongs to the NusB family.

Its function is as follows. Involved in transcription antitermination. Required for transcription of ribosomal RNA (rRNA) genes. Binds specifically to the boxA antiterminator sequence of the ribosomal RNA (rrn) operons. The chain is Transcription antitermination protein NusB from Streptococcus pyogenes serotype M6 (strain ATCC BAA-946 / MGAS10394).